Here is a 318-residue protein sequence, read N- to C-terminus: Aspartate carbamoyltransferase catalytic subunit (318 aa).

Residues Arg58 and Thr59 each coordinate carbamoyl phosphate. Residue Lys86 coordinates L-aspartate. 3 residues coordinate carbamoyl phosphate: Arg108, His141, and Gln144. L-aspartate-binding residues include Arg174 and Arg226. Positions 270 and 271 each coordinate carbamoyl phosphate.

The protein belongs to the aspartate/ornithine carbamoyltransferase superfamily. ATCase family. Heterododecamer (2C3:3R2) of six catalytic PyrB chains organized as two trimers (C3), and six regulatory PyrI chains organized as three dimers (R2).

It catalyses the reaction carbamoyl phosphate + L-aspartate = N-carbamoyl-L-aspartate + phosphate + H(+). It functions in the pathway pyrimidine metabolism; UMP biosynthesis via de novo pathway; (S)-dihydroorotate from bicarbonate: step 2/3. Functionally, catalyzes the condensation of carbamoyl phosphate and aspartate to form carbamoyl aspartate and inorganic phosphate, the committed step in the de novo pyrimidine nucleotide biosynthesis pathway. The chain is Aspartate carbamoyltransferase catalytic subunit from Lactobacillus gasseri (strain ATCC 33323 / DSM 20243 / BCRC 14619 / CIP 102991 / JCM 1131 / KCTC 3163 / NCIMB 11718 / NCTC 13722 / AM63).